Consider the following 269-residue polypeptide: Imidazoleglycerol-phosphate dehydratase 3, chloroplastic (269 aa).

The transit peptide at 1–51 (MTTAPVVSPSLSRLHSAPASPFPKAPVGSGAGVAFPARPYGPSLRLRSAVM) directs the protein to the chloroplast. Substrate contacts are provided by residues glutamate 83, 109–117 (HMLDQLASH), 135–139 (HHSNE), arginine 161, and arginine 183. Mn(2+) is bound by residues histidine 109, histidine 135, histidine 136, and glutamate 139. Mn(2+) contacts are provided by histidine 207, histidine 231, histidine 232, and glutamate 235. Substrate contacts are provided by residues 231–239 (HHIIEATFK) and 261–263 (SSK).

It belongs to the imidazoleglycerol-phosphate dehydratase family. Mn(2+) is required as a cofactor.

It is found in the plastid. Its subcellular location is the chloroplast. The catalysed reaction is D-erythro-1-(imidazol-4-yl)glycerol 3-phosphate = 3-(imidazol-4-yl)-2-oxopropyl phosphate + H2O. It participates in amino-acid biosynthesis; L-histidine biosynthesis; L-histidine from 5-phospho-alpha-D-ribose 1-diphosphate: step 6/9. This is Imidazoleglycerol-phosphate dehydratase 3, chloroplastic from Triticum aestivum (Wheat).